A 580-amino-acid chain; its full sequence is PTS system fructose-specific EIIB'BC component (580 aa).

2 PTS EIIB type-2 domains span residues 3–100 (MKIA…QAAE) and 124–221 (KKIV…NAFA). Residues Cys11 and Cys132 each act as phosphocysteine intermediate; for EIIB activity in the active site. Phosphocysteine; by EIIA is present on residues Cys11 and Cys132. The PTS EIIC type-2 domain occupies 244 to 579 (VYKHLMTGVS…KKSAQAKAVA (336 aa)). The next 9 helical transmembrane spans lie at 254–274 (HMLPVVVAGGLIIALSFVFGI), 292–312 (GGSAFALMIPVLAGYIAFSIA), 322–342 (IGGMLASSTGAGFLGGIVAGF), 367–387 (ILIIPFIASLFTGLVMIYVVG), 408–428 (NAILLGIVLGAMMCFDLGGPV), 448–468 (MAAIMAAGMVPALGMGLATFI), 480–500 (AGKASFVLGLCFISEGAIPFA), 507–527 (VIPACMVGGAVTGALSMLFGA), and 537–557 (FVLLIPNAISPVLLYLVAIAV).

It localises to the cell inner membrane. The catalysed reaction is D-fructose(out) + N(pros)-phospho-L-histidyl-[protein] = D-fructose 1-phosphate(in) + L-histidyl-[protein]. In terms of biological role, the phosphoenolpyruvate-dependent sugar phosphotransferase system (sugar PTS), a major carbohydrate active transport system, catalyzes the phosphorylation of incoming sugar substrates concomitantly with their translocation across the cell membrane. The enzyme II FruAB PTS system is involved in fructose transport. In Vibrio cholerae serotype O1 (strain ATCC 39315 / El Tor Inaba N16961), this protein is PTS system fructose-specific EIIB'BC component.